The chain runs to 485 residues: Sulfate adenylyltransferase subunit 1 (485 aa).

One can recognise a tr-type G domain in the interval 30 to 243 (KGLLRFLTCG…ELLETIDTQR (214 aa)). Positions 39–46 (GSVDDGKS) are G1. 39 to 46 (GSVDDGKS) contributes to the GTP binding site. Positions 97–101 (GITID) are G2. The tract at residues 118–121 (DTPG) is G3. Residues 118–122 (DTPGH) and 173–176 (NKMD) contribute to the GTP site. A G4 region spans residues 173–176 (NKMD). Positions 210–212 (SAL) are G5.

This sequence belongs to the TRAFAC class translation factor GTPase superfamily. Classic translation factor GTPase family. CysN/NodQ subfamily. As to quaternary structure, heterodimer composed of CysD, the smaller subunit, and CysN.

The catalysed reaction is sulfate + ATP + H(+) = adenosine 5'-phosphosulfate + diphosphate. The protein operates within sulfur metabolism; hydrogen sulfide biosynthesis; sulfite from sulfate: step 1/3. Functionally, with CysD forms the ATP sulfurylase (ATPS) that catalyzes the adenylation of sulfate producing adenosine 5'-phosphosulfate (APS) and diphosphate, the first enzymatic step in sulfur assimilation pathway. APS synthesis involves the formation of a high-energy phosphoric-sulfuric acid anhydride bond driven by GTP hydrolysis by CysN coupled to ATP hydrolysis by CysD. The polypeptide is Sulfate adenylyltransferase subunit 1 (Shewanella oneidensis (strain ATCC 700550 / JCM 31522 / CIP 106686 / LMG 19005 / NCIMB 14063 / MR-1)).